The chain runs to 280 residues: MAFSSLSPLPMKSLDISRSSSSVSRSPYHFQRYLLRRLQLSSRSNLEIKDSSNTREGCCSSAESNTWKRILSAAMAAAVIASSSGVPAMAELNRFEADTRGEFGIGSAAQYGSADLSKTVHSNENFRRANFTSADMRESDFSGSTFNGAYLEKAVAYKANFSGADLSDTLMDRMVLNEANLTNAVLVRSVLTRSDLGGAKIEGADFSDAVIDLLQKQALCKYATGTNPLTGVDTRKSLGCGNSRRNAYGSPSSPLLSAPPQRLLGRDGFCDEKTGLCDVK.

A chloroplast-targeting transit peptide spans 1–59 (MAFSSLSPLPMKSLDISRSSSSVSRSPYHFQRYLLRRLQLSSRSNLEIKDSSNTREGCC). A thylakoid-targeting transit peptide spans 60-90 (SSAESNTWKRILSAAMAAAVIASSSGVPAMA). Pentapeptide repeat domains are found at residues 124 to 163 (ENFRRANFTSADMRESDFSGSTFNGAYLEKAVAYKANFSG) and 169 to 208 (TLMDRMVLNEANLTNAVLVRSVLTRSDLGGAKIEGADFSD).

In terms of assembly, interacts with thioredoxin. Interacts in vitro with LTO1.

It is found in the plastid. It localises to the chloroplast thylakoid lumen. Pentapeptide repeat protein of unknown function. Subject to degradation when reduced. This Arabidopsis thaliana (Mouse-ear cress) protein is Thylakoid lumenal protein TL20.3, chloroplastic.